The chain runs to 303 residues: Aspartate carbamoyltransferase catalytic subunit (303 aa).

2 residues coordinate carbamoyl phosphate: arginine 51 and threonine 52. An L-aspartate-binding site is contributed by lysine 80. Carbamoyl phosphate is bound by residues arginine 101, histidine 129, and glutamine 132. L-aspartate contacts are provided by arginine 162 and arginine 221. Leucine 260 and proline 261 together coordinate carbamoyl phosphate.

This sequence belongs to the aspartate/ornithine carbamoyltransferase superfamily. ATCase family. As to quaternary structure, heterooligomer of catalytic and regulatory chains.

The catalysed reaction is carbamoyl phosphate + L-aspartate = N-carbamoyl-L-aspartate + phosphate + H(+). It functions in the pathway pyrimidine metabolism; UMP biosynthesis via de novo pathway; (S)-dihydroorotate from bicarbonate: step 2/3. Its function is as follows. Catalyzes the condensation of carbamoyl phosphate and aspartate to form carbamoyl aspartate and inorganic phosphate, the committed step in the de novo pyrimidine nucleotide biosynthesis pathway. The chain is Aspartate carbamoyltransferase catalytic subunit from Saccharolobus islandicus (strain M.16.4 / Kamchatka #3) (Sulfolobus islandicus).